The following is a 264-amino-acid chain: Fructose-1,6-bisphosphatase/inositol-1-monophosphatase (264 aa).

Residues Glu70, Asp86, Leu88, and Asp89 each contribute to the Mg(2+) site. Substrate contacts are provided by residues 89–91, Arg185, and Ala190; that span reads DGT. Asp214 is a binding site for Mg(2+).

It belongs to the inositol monophosphatase superfamily. FBPase class 4 family. Mg(2+) is required as a cofactor.

It carries out the reaction beta-D-fructose 1,6-bisphosphate + H2O = beta-D-fructose 6-phosphate + phosphate. The enzyme catalyses a myo-inositol phosphate + H2O = myo-inositol + phosphate. Phosphatase with broad specificity; it can dephosphorylate fructose 1,6-bisphosphate, and both D and L isomers of inositol-1-phosphate (I-1-P). The protein is Fructose-1,6-bisphosphatase/inositol-1-monophosphatase (suhB) of Aquifex aeolicus (strain VF5).